The sequence spans 104 residues: Cuticle protein 67, isoform B (104 aa).

Tandem repeats lie at residues 7 to 10, 14 to 17, 21 to 24, 28 to 31, 85 to 88, 92 to 95, and 98 to 101.

Functionally, component of the cuticle of migratory locust which contains more than 100 different structural proteins. This is Cuticle protein 67, isoform B from Locusta migratoria (Migratory locust).